A 691-amino-acid polypeptide reads, in one-letter code: Elongation factor G (691 aa).

The 276-residue stretch at 8–283 folds into the tr-type G domain; that stretch reads EDYRNFGIMA…AVVDFLPSPI (276 aa). Residues 17 to 24, 81 to 85, and 135 to 138 contribute to the GTP site; these read AHIDAGKT, DTPGH, and NKMD.

Belongs to the TRAFAC class translation factor GTPase superfamily. Classic translation factor GTPase family. EF-G/EF-2 subfamily.

It is found in the cytoplasm. In terms of biological role, catalyzes the GTP-dependent ribosomal translocation step during translation elongation. During this step, the ribosome changes from the pre-translocational (PRE) to the post-translocational (POST) state as the newly formed A-site-bound peptidyl-tRNA and P-site-bound deacylated tRNA move to the P and E sites, respectively. Catalyzes the coordinated movement of the two tRNA molecules, the mRNA and conformational changes in the ribosome. The chain is Elongation factor G from Xanthobacter autotrophicus (strain ATCC BAA-1158 / Py2).